We begin with the raw amino-acid sequence, 281 residues long: Aldo-keto reductase MMAR_1744 (281 aa).

Residue Y56 is the Proton donor of the active site. NADPH is bound by residues L196, I234, S237, T245, N246, and R272.

Belongs to the aldo/keto reductase family.

This is Aldo-keto reductase MMAR_1744 from Mycobacterium marinum (strain ATCC BAA-535 / M).